The chain runs to 294 residues: 4-hydroxy-tetrahydrodipicolinate synthase (294 aa).

Thr-47 contributes to the pyruvate binding site. The active-site Proton donor/acceptor is Tyr-135. The active-site Schiff-base intermediate with substrate is the Lys-163. Thr-205 contacts pyruvate.

It belongs to the DapA family. In terms of assembly, homotetramer; dimer of dimers.

The protein resides in the cytoplasm. The catalysed reaction is L-aspartate 4-semialdehyde + pyruvate = (2S,4S)-4-hydroxy-2,3,4,5-tetrahydrodipicolinate + H2O + H(+). It functions in the pathway amino-acid biosynthesis; L-lysine biosynthesis via DAP pathway; (S)-tetrahydrodipicolinate from L-aspartate: step 3/4. Functionally, catalyzes the condensation of (S)-aspartate-beta-semialdehyde [(S)-ASA] and pyruvate to 4-hydroxy-tetrahydrodipicolinate (HTPA). This chain is 4-hydroxy-tetrahydrodipicolinate synthase, found in Rickettsia africae (strain ESF-5).